A 466-amino-acid chain; its full sequence is Myocardial zonula adherens protein (466 aa).

A compositionally biased stretch (polar residues) spans 1–10; sequence MLRSTSTVTL. The first 20 residues, 1–20, serve as a signal peptide directing secretion; the sequence is MLRSTSTVTLLSGGAARTPG. The segment at 1–23 is disordered; the sequence is MLRSTSTVTLLSGGAARTPGAPS. Coiled-coil stretches lie at residues 96–142 and 174–418; these read QLKE…SHAQ and LQKT…TQAK. Residues 424–425 carry the Required for DYNLL1-binding motif; the sequence is RE.

The protein belongs to the MYZAP family. In terms of assembly, interacts with DSP, MPRIP and TJP1/ZO1. Interaction with MPRIP inhibits the activation of transcription factor SRF. Interacts with GRIN1. Interacts with DYNLL1. As to expression, detected in heart, liver, skeletal muscle, placenta, small intestine, lung, prostate and testis. Expressed in arrector pili muscle (at protein level).

The protein localises to the cytoplasm. The protein resides in the cytoskeleton. It localises to the cell membrane. It is found in the myofibril. Its subcellular location is the sarcomere. The protein localises to the i band. The protein resides in the z line. It localises to the cell junction. In terms of biological role, plays a role in cellular signaling via Rho-related GTP-binding proteins and subsequent activation of transcription factor SRF. Targets TJP1 to cell junctions. In cortical neurons, may play a role in glutaminergic signal transduction through interaction with the NMDA receptor subunit GRIN1. The protein is Myocardial zonula adherens protein (MYZAP) of Homo sapiens (Human).